The chain runs to 209 residues: MSKVTQITHPLILHKLALIRDKRTGSKDFRELVEEVAMLMAYEVTRNLQTEEVEIETPICNTTCKMLSGKKVAVVPILRAGLGMVGGMLKLIPAAKVGHIGLYRDETTLKPVEYFCKLPQDIGEREVIVTDPMLATGGSAIDAITMLKQKGAKNIRLMCLIAAEDGIKSVTEAHPDVDIYTAAIDKELNKNGYIVPGLGDAGDRLYGTK.

5-phospho-alpha-D-ribose 1-diphosphate contacts are provided by residues arginine 79, arginine 104, and 131–139 (DPMLATGGS). Residues isoleucine 194 and 199 to 201 (GDA) contribute to the uracil site. Aspartate 200 is a 5-phospho-alpha-D-ribose 1-diphosphate binding site.

It belongs to the UPRTase family. The cofactor is Mg(2+).

The catalysed reaction is UMP + diphosphate = 5-phospho-alpha-D-ribose 1-diphosphate + uracil. Its pathway is pyrimidine metabolism; UMP biosynthesis via salvage pathway; UMP from uracil: step 1/1. With respect to regulation, allosterically activated by GTP. Its function is as follows. Catalyzes the conversion of uracil and 5-phospho-alpha-D-ribose 1-diphosphate (PRPP) to UMP and diphosphate. The chain is Uracil phosphoribosyltransferase from Clostridium kluyveri (strain NBRC 12016).